A 155-amino-acid polypeptide reads, in one-letter code: SsrA-binding protein (155 aa).

The segment at 135-155 (KRQDIKQRDVERETRREIMRH) is disordered.

The protein belongs to the SmpB family.

The protein localises to the cytoplasm. Functionally, required for rescue of stalled ribosomes mediated by trans-translation. Binds to transfer-messenger RNA (tmRNA), required for stable association of tmRNA with ribosomes. tmRNA and SmpB together mimic tRNA shape, replacing the anticodon stem-loop with SmpB. tmRNA is encoded by the ssrA gene; the 2 termini fold to resemble tRNA(Ala) and it encodes a 'tag peptide', a short internal open reading frame. During trans-translation Ala-aminoacylated tmRNA acts like a tRNA, entering the A-site of stalled ribosomes, displacing the stalled mRNA. The ribosome then switches to translate the ORF on the tmRNA; the nascent peptide is terminated with the 'tag peptide' encoded by the tmRNA and targeted for degradation. The ribosome is freed to recommence translation, which seems to be the essential function of trans-translation. This is SsrA-binding protein from Oleidesulfovibrio alaskensis (strain ATCC BAA-1058 / DSM 17464 / G20) (Desulfovibrio alaskensis).